The following is a 156-amino-acid chain: Succinate dehydrogenase assembly factor 2-B, mitochondrial (156 aa).

Residues 1–24 (MLRQFIISRVGRRLQLPMITQSRL) constitute a mitochondrion transit peptide.

This sequence belongs to the SDHAF2 family. Interacts with the flavoprotein subunit within the SDH catalytic dimer.

Its subcellular location is the mitochondrion matrix. In terms of biological role, plays an essential role in the assembly of succinate dehydrogenase (SDH), an enzyme complex (also referred to as respiratory complex II) that is a component of both the tricarboxylic acid (TCA) cycle and the mitochondrial electron transport chain, and which couples the oxidation of succinate to fumarate with the reduction of ubiquinone (coenzyme Q) to ubiquinol. Required for flavinylation (covalent attachment of FAD) of the flavoprotein subunit of the SDH catalytic dimer. This chain is Succinate dehydrogenase assembly factor 2-B, mitochondrial, found in Drosophila sechellia (Fruit fly).